The sequence spans 82 residues: Sec-independent protein translocase protein TatA (82 aa).

Residues 1-21 (MGIFDWKHWIVILIVVVLVFG) form a helical membrane-spanning segment. The segment at 43–82 (VNTEEDDKKDQPAAQPAQPLNQPHTIDAQAQKVEEPARKD) is disordered.

Belongs to the TatA/E family. As to quaternary structure, the Tat system comprises two distinct complexes: a TatABC complex, containing multiple copies of TatA, TatB and TatC subunits, and a separate TatA complex, containing only TatA subunits. Substrates initially bind to the TatABC complex, which probably triggers association of the separate TatA complex to form the active translocon.

It is found in the cell inner membrane. Functionally, part of the twin-arginine translocation (Tat) system that transports large folded proteins containing a characteristic twin-arginine motif in their signal peptide across membranes. TatA could form the protein-conducting channel of the Tat system. This Pseudomonas aeruginosa (strain LESB58) protein is Sec-independent protein translocase protein TatA.